The primary structure comprises 449 residues: Neurexin-1a-beta (449 aa).

An N-terminal signal peptide occupies residues 1–38; it reads MLRLWPGGAPGGLASILLRISLRLALWLPPLTLGSALA. At 39–373 the chain is on the extracellular side; sequence EGPGELYVPQ…EVIRESSSTT (335 aa). One can recognise a Laminin G-like domain in the interval 71–272; that stretch reads TTYIFGRDGG…DPNVRVEGSA (202 aa). Residues 276 to 366 are disordered; the sequence is GDMPSSSITP…AKGYPSPEVI (91 aa). Low complexity predominate over residues 280-311; the sequence is SSSITPQSSVSAAGNRSETSPSITDITTTTAS. Polar residues predominate over residues 312–322; it reads NRQGKQTTTPQ. Residues 374-394 form a helical membrane-spanning segment; the sequence is GMVVGIVAAAALCILILLYAM. At 395-449 the chain is on the cytoplasmic side; that stretch reads YKYRNRDEGSYHVDESRNYISNSATQPNGAAVKEKPIGVPKNKKDKKNKDKEYYV. Residues 415-449 are disordered; sequence SNSATQPNGAAVKEKPIGVPKNKKDKKNKDKEYYV.

The protein belongs to the neurexin family.

It is found in the membrane. In terms of biological role, neuronal cell surface protein that may be involved in cell recognition and cell adhesion. May play a role in formation or maintenance of synaptic junctions. In Danio rerio (Zebrafish), this protein is Neurexin-1a-beta (nrxn1a).